The sequence spans 328 residues: m7GpppN-mRNA hydrolase NUDT17 (328 aa).

Residues 90–236 form the Nudix hydrolase domain; it reads GVDLGVAVIL…DGTETPGLLP (147 aa). The Nudix box signature appears at 127–148; the sequence is GHVELEEELLDGGLRELWEESG. Positions 142 and 146 each coordinate Mg(2+). The tract at residues 299 to 328 is disordered; that stretch reads PCKSAAYLDPGPAKEEWNMDPLPPNQGSGK.

This sequence belongs to the Nudix hydrolase family. Requires Mg(2+) as cofactor. It depends on Mn(2+) as a cofactor.

The catalysed reaction is a 5'-end (N(7)-methyl 5'-triphosphoguanosine)-ribonucleoside in mRNA + H2O = N(7)-methyl-GDP + a 5'-end phospho-ribonucleoside in mRNA + 2 H(+). Its function is as follows. Acts as a decapping enzyme capable of hydrolyzing monomethylated capped RNAs (in vitro). Hydrolyzes monomethylated capped RNA after alpha and beta phosphates to form N(7)-methyl-GDP. Shows low activity towards unmethylated capped RNA. This is m7GpppN-mRNA hydrolase NUDT17 (NUDT17) from Homo sapiens (Human).